We begin with the raw amino-acid sequence, 543 residues long: 2-succinyl-5-enolpyruvyl-6-hydroxy-3-cyclohexene-1-carboxylate synthase (543 aa).

It belongs to the TPP enzyme family. MenD subfamily. Homodimer. Requires Mg(2+) as cofactor. Mn(2+) serves as cofactor. It depends on thiamine diphosphate as a cofactor.

The catalysed reaction is isochorismate + 2-oxoglutarate + H(+) = 5-enolpyruvoyl-6-hydroxy-2-succinyl-cyclohex-3-ene-1-carboxylate + CO2. The protein operates within quinol/quinone metabolism; 1,4-dihydroxy-2-naphthoate biosynthesis; 1,4-dihydroxy-2-naphthoate from chorismate: step 2/7. It functions in the pathway quinol/quinone metabolism; menaquinone biosynthesis. In terms of biological role, catalyzes the thiamine diphosphate-dependent decarboxylation of 2-oxoglutarate and the subsequent addition of the resulting succinic semialdehyde-thiamine pyrophosphate anion to isochorismate to yield 2-succinyl-5-enolpyruvyl-6-hydroxy-3-cyclohexene-1-carboxylate (SEPHCHC). This Corynebacterium glutamicum (strain R) protein is 2-succinyl-5-enolpyruvyl-6-hydroxy-3-cyclohexene-1-carboxylate synthase.